Here is a 269-residue protein sequence, read N- to C-terminus: Indole-3-glycerol phosphate synthase (269 aa).

It belongs to the TrpC family.

The enzyme catalyses 1-(2-carboxyphenylamino)-1-deoxy-D-ribulose 5-phosphate + H(+) = (1S,2R)-1-C-(indol-3-yl)glycerol 3-phosphate + CO2 + H2O. It participates in amino-acid biosynthesis; L-tryptophan biosynthesis; L-tryptophan from chorismate: step 4/5. The chain is Indole-3-glycerol phosphate synthase from Rhodococcus opacus (strain B4).